The sequence spans 265 residues: Glutamate racemase (265 aa).

Residues 12–13 (DS) and 44–45 (YG) each bind substrate. The active-site Proton donor/acceptor is the cysteine 75. 76–77 (NT) lines the substrate pocket. Cysteine 186 functions as the Proton donor/acceptor in the catalytic mechanism. 187–188 (TH) lines the substrate pocket.

It belongs to the aspartate/glutamate racemases family.

The catalysed reaction is L-glutamate = D-glutamate. It participates in cell wall biogenesis; peptidoglycan biosynthesis. In terms of biological role, provides the (R)-glutamate required for cell wall biosynthesis. The sequence is that of Glutamate racemase from Pseudomonas putida (strain ATCC 47054 / DSM 6125 / CFBP 8728 / NCIMB 11950 / KT2440).